We begin with the raw amino-acid sequence, 235 residues long: Ubiquinone biosynthesis O-methyltransferase (235 aa).

S-adenosyl-L-methionine is bound by residues R40, G60, D81, and M125.

The protein belongs to the methyltransferase superfamily. UbiG/COQ3 family.

It catalyses the reaction a 3-demethylubiquinol + S-adenosyl-L-methionine = a ubiquinol + S-adenosyl-L-homocysteine + H(+). The enzyme catalyses a 3-(all-trans-polyprenyl)benzene-1,2-diol + S-adenosyl-L-methionine = a 2-methoxy-6-(all-trans-polyprenyl)phenol + S-adenosyl-L-homocysteine + H(+). The protein operates within cofactor biosynthesis; ubiquinone biosynthesis. In terms of biological role, O-methyltransferase that catalyzes the 2 O-methylation steps in the ubiquinone biosynthetic pathway. This chain is Ubiquinone biosynthesis O-methyltransferase, found in Nitrosomonas europaea (strain ATCC 19718 / CIP 103999 / KCTC 2705 / NBRC 14298).